The chain runs to 312 residues: Olfactory receptor 51B6 (312 aa).

The Extracellular segment spans residues 1–23; the sequence is MGLNKSASTFQLTGFPGMEKAHH. N-linked (GlcNAc...) asparagine glycosylation occurs at N4. Residues 24–44 traverse the membrane as a helical segment; the sequence is WIFIPLLAAYISILLGNGTLL. The Cytoplasmic segment spans residues 45–52; sequence FLIRNDHN. The chain crosses the membrane as a helical span at residues 53–73; the sequence is LHEPMYYFLAMLAATDLGVTL. At 74 to 97 the chain is on the extracellular side; the sequence is TTMPTVLGVLWLDHREIGHGACFS. The cysteines at positions 95 and 187 are disulfide-linked. The chain crosses the membrane as a helical span at residues 98–118; it reads QAYFIHTLSVMESGVLLAMAY. At 119–137 the chain is on the cytoplasmic side; that stretch reads DCFITIRSPLRYTSILTNT. A helical membrane pass occupies residues 138–158; it reads QVMKIGVRVLTRAGLSIMPIV. Residues 159–194 are Extracellular-facing; the sequence is VRLHWFPYCRSHVLSHAFCLHQDVIKLACADITFNR. The helical transmembrane segment at 195-215 threads the bilayer; sequence LYPVVVLFAMVLLDFLIIFFS. The Cytoplasmic segment spans residues 216–235; that stretch reads YILILKTVMGIGSGGERAKA. Residues 236-256 traverse the membrane as a helical segment; the sequence is LNTCVSHICCILVFYVTVVCL. The Extracellular segment spans residues 257–271; sequence TFIHRFGKHVPHVVH. A helical transmembrane segment spans residues 272–292; sequence ITMSYIHFLFPPFMNPFIYSI. At 293–312 the chain is on the cytoplasmic side; it reads KTKQIQSGILRLFSLPHSRA.

The protein belongs to the G-protein coupled receptor 1 family.

Its subcellular location is the cell membrane. Odorant receptor. This Homo sapiens (Human) protein is Olfactory receptor 51B6 (OR51B6).